The chain runs to 618 residues: Uptake hydrogenase large subunit (618 aa).

Residues Cys75, Cys78, Cys597, and Cys600 each coordinate Ni(2+).

Belongs to the [NiFe]/[NiFeSe] hydrogenase large subunit family. As to quaternary structure, heterodimer of a large and a small subunit. The cofactor is Ni(2+).

Its subcellular location is the cell membrane. It carries out the reaction H2 + A = AH2. This enzyme recycles the H(2) produced by nitrogenase to increase the production of ATP and to protect nitrogenase against inhibition or damage by O(2) under carbon- or phosphate-limited conditions. This chain is Uptake hydrogenase large subunit (hupB), found in Rubrivivax gelatinosus (Rhodocyclus gelatinosus).